Consider the following 509-residue polypeptide: Photosystem II CP47 reaction center protein (509 aa).

6 consecutive transmembrane segments (helical) span residues 21–36, 101–115, 140–156, 203–218, 237–252, and 457–472; these read AVHL…WAGS, IVLS…IWHW, GIHL…FGAF, IAAG…FHLT, VLSS…AFVT, and NFAL…HGSR.

It belongs to the PsbB/PsbC family. PsbB subfamily. PSII is composed of 1 copy each of membrane proteins PsbA, PsbB, PsbC, PsbD, PsbE, PsbF, PsbH, PsbI, PsbJ, PsbK, PsbL, PsbM, PsbT, PsbX, PsbY, PsbZ, Psb30/Ycf12, at least 3 peripheral proteins of the oxygen-evolving complex and a large number of cofactors. It forms dimeric complexes. Binds multiple chlorophylls. PSII binds additional chlorophylls, carotenoids and specific lipids. serves as cofactor.

The protein localises to the plastid. It is found in the chloroplast thylakoid membrane. Functionally, one of the components of the core complex of photosystem II (PSII). It binds chlorophyll and helps catalyze the primary light-induced photochemical processes of PSII. PSII is a light-driven water:plastoquinone oxidoreductase, using light energy to abstract electrons from H(2)O, generating O(2) and a proton gradient subsequently used for ATP formation. This Pyropia yezoensis (Susabi-nori) protein is Photosystem II CP47 reaction center protein.